An 85-amino-acid chain; its full sequence is RNA-binding protein Hfq (85 aa).

Residues 9 to 69 (DQLLNTARKD…ISTIIPAKII (61 aa)) enclose the Sm domain.

Belongs to the Hfq family. In terms of assembly, homohexamer.

Its function is as follows. RNA chaperone that binds small regulatory RNA (sRNAs) and mRNAs to facilitate mRNA translational regulation in response to envelope stress, environmental stress and changes in metabolite concentrations. Also binds with high specificity to tRNAs. The chain is RNA-binding protein Hfq from Leptospira interrogans serogroup Icterohaemorrhagiae serovar copenhageni (strain Fiocruz L1-130).